We begin with the raw amino-acid sequence, 298 residues long: Apolipoprotein E (298 aa).

The first 18 residues, 1 to 18 (MKVLWAALVVTLLAGCRA), serve as a signal peptide directing secretion. 8 repeat units span residues 74–95 (LLIEDTMKEVKAYKAELEKELG), 96–117 (PVAEDTKARLAKELQAAQARLG), 118–139 (ADMEEVRNRLSQYRSEVQAMLG), 140–161 (QSSEELRARLTSHPRKMKRRLQ), 162–183 (RDIDELQKRMAVYKAGAQEGAE), 184–204 (RGVSAIRERLGSLIEQGRLQA), 205–222 (LASQPLQERAQAWGEQMR), and 223–244 (GRLEKVGSQARDRLEEVREQME). The interval 74–244 (LLIEDTMKEV…RLEEVREQME (171 aa)) is 8 X 22 AA approximate tandem repeats. Met137 carries the post-translational modification Methionine sulfoxide. The residue at position 141 (Ser141) is a Phosphoserine. The LDL and other lipoprotein receptors binding stretch occupies residues 152–162 (HPRKMKRRLQR). 156 to 159 (MKRR) is a heparin binding site. A heparin-binding site is contributed by 218 to 225 (GEQMRGRL). Residues 260-272 (RLKSWFEPMMEDM) form a specificity for association with VLDL region.

It belongs to the apolipoprotein A1/A4/E family. As to quaternary structure, homotetramer. May interact with ABCA1; functionally associated with ABCA1 in the biogenesis of HDLs. May interact with APP/A4 amyloid-beta peptide; the interaction is extremely stable in vitro but its physiological significance is unclear. May interact with MAPT. May interact with MAP2. In the cerebrospinal fluid, interacts with secreted SORL1. Interacts with PMEL; this allows the loading of PMEL luminal fragment on ILVs to induce fibril nucleation. APOE exists as multiple glycosylated and sialylated glycoforms within cells and in plasma. The extent of glycosylation and sialylation are tissue and context specific. In terms of processing, glycated in plasma VLDL. Post-translationally, phosphorylated by FAM20C in the extracellular medium.

The protein resides in the secreted. The protein localises to the extracellular space. Its subcellular location is the extracellular matrix. It is found in the extracellular vesicle. It localises to the endosome. The protein resides in the multivesicular body. APOE is an apolipoprotein, a protein associating with lipid particles, that mainly functions in lipoprotein-mediated lipid transport between organs via the plasma and interstitial fluids. APOE is a core component of plasma lipoproteins and is involved in their production, conversion and clearance. Apolipoproteins are amphipathic molecules that interact both with lipids of the lipoprotein particle core and the aqueous environment of the plasma. As such, APOE associates with chylomicrons, chylomicron remnants, very low density lipoproteins (VLDL) and intermediate density lipoproteins (IDL) but shows a preferential binding to high-density lipoproteins (HDL). It also binds a wide range of cellular receptors including the LDL receptor/LDLR and the very low-density lipoprotein receptor/VLDLR that mediate the cellular uptake of the APOE-containing lipoprotein particles. Finally, APOE also has a heparin-binding activity and binds heparan-sulfate proteoglycans on the surface of cells, a property that supports the capture and the receptor-mediated uptake of APOE-containing lipoproteins by cells. This Cavia porcellus (Guinea pig) protein is Apolipoprotein E (APOE).